The sequence spans 1158 residues: Adipocyte enhancer-binding protein 1 (1158 aa).

The signal sequence occupies residues 1–25 (MAAVRGAPLLSCLLALLALCPGGRP). Positions 41 to 387 (FLSELEPEPR…TPTEKVKCPP (347 aa)) are disordered. Over residues 45–55 (LEPEPREDDVE) the composition is skewed to acidic residues. The segment covering 100–110 (DKGPKVPKESL) has biased composition (basic and acidic residues). Over residues 116 to 166 (PPKKGKEKPPKATKKPKEKPPKATKKPKEKPPKATKKPKEKPPKATKKPPS) the composition is skewed to basic residues. Residues 182-192 (PLPPPPSPGPE) are compositionally biased toward pro residues. Over residues 193 to 202 (ELPQEGGAPL) the composition is skewed to low complexity. Over residues 211 to 223 (EETHVEAREHQPE) the composition is skewed to basic and acidic residues. Over residues 252–266 (RQKQPRPPPSRRRRP) the composition is skewed to basic residues. Positions 267 to 289 (ERVWPEPPEEKAPAPAPEERIEP) are enriched in basic and acidic residues. Residues 290-300 (PVKPLLPPLPP) show a composition bias toward pro residues. A compositionally biased stretch (basic and acidic residues) spans 326–371 (PDAERQTDEEKEELKKPKKEDSSPKEETDKWAVEKGKDHKEPRKGE). One can recognise an F5/8 type C domain in the interval 383–540 (VKCPPIGMES…LCMRLEVLGC (158 aa)). Positions 390 to 555 (MESHRIEDNQ…YSYYAQNEVV (166 aa)) are required for DNA-binding and interaction with NFKBIA. An interaction with MAPK1 and MAPK3 region spans residues 421–624 (TGATEDDYYD…EPEFRYTAGI (204 aa)). Residue Asn-528 is glycosylated (N-linked (GlcNAc...) asparagine). Positions 555–985 (VATDDLDFRH…TQCNFILARS (431 aa)) are interaction with PTEN. Residues 563-904 (RHHSYKDMRQ…EALLTFMEQV (342 aa)) form the Peptidase M14 domain. The N-linked (GlcNAc...) asparagine glycan is linked to Asn-922. Residues 941–1158 (DYWRILNPGE…ETYTVNFGDF (218 aa)) form a required for transcriptional repression region. The tract at residues 1006–1158 (DPSRPMTPQQ…ETYTVNFGDF (153 aa)) is interaction with MAPK1 and MAPK3. The segment covering 1108–1137 (EFETQLEPEFETQLEPEFEEEEEEEKEEEI) has biased composition (acidic residues). The interval 1108–1141 (EFETQLEPEFETQLEPEFEEEEEEEKEEEIATGQ) is disordered.

Belongs to the peptidase M14 family. As to quaternary structure, isoform 1: Interacts with different types of collagen, including collagens I, III, and V. Isoform 2: Interacts with GNG5, NFKBIA, MAPK1, MAPK3 and PTEN. Interaction with MAPK1 may stimulate DNA-binding. May interact with calmodulin. Binds to DNA in vitro. Phosphorylated by MAPK1 in vitro. Expressed in osteoblast and visceral fat.

The protein resides in the secreted. Its subcellular location is the cytoplasm. It is found in the nucleus. As a positive regulator of collagen fibrillogenesis, it is probably involved in the organization and remodeling of the extracellular matrix. In terms of biological role, may positively regulate MAP-kinase activity in adipocytes, leading to enhanced adipocyte proliferation and reduced adipocyte differentiation. May also positively regulate NF-kappa-B activity in macrophages by promoting the phosphorylation and subsequent degradation of I-kappa-B-alpha (NFKBIA), leading to enhanced macrophage inflammatory responsiveness. Can act as a transcriptional repressor. This Homo sapiens (Human) protein is Adipocyte enhancer-binding protein 1 (AEBP1).